Consider the following 78-residue polypeptide: Probable [Fe-S]-dependent transcriptional repressor (78 aa).

Positions 56, 61, 64, and 70 each coordinate iron-sulfur cluster.

It belongs to the FeoC family.

May function as a transcriptional regulator that controls feoABC expression. The chain is Probable [Fe-S]-dependent transcriptional repressor from Escherichia coli O9:H4 (strain HS).